Consider the following 138-residue polypeptide: Transcription antitermination protein NusB (138 aa).

The protein belongs to the NusB family.

Involved in transcription antitermination. Required for transcription of ribosomal RNA (rRNA) genes. Binds specifically to the boxA antiterminator sequence of the ribosomal RNA (rrn) operons. This is Transcription antitermination protein NusB from Photorhabdus laumondii subsp. laumondii (strain DSM 15139 / CIP 105565 / TT01) (Photorhabdus luminescens subsp. laumondii).